Here is a 255-residue protein sequence, read N- to C-terminus: Small ribosomal subunit protein eS1 (255 aa).

Ala-2 bears the N-acetylalanine; partial mark.

It belongs to the eukaryotic ribosomal protein eS1 family. As to quaternary structure, component of the small ribosomal subunit. Mature ribosomes consist of a small (40S) and a large (60S) subunit. The 40S subunit contains about 33 different proteins and 1 molecule of RNA (18S). The 60S subunit contains about 49 different proteins and 3 molecules of RNA (25S, 5.8S and 5S).

It localises to the cytoplasm. This chain is Small ribosomal subunit protein eS1, found in Yarrowia lipolytica (strain CLIB 122 / E 150) (Yeast).